Consider the following 560-residue polypeptide: S100P-binding protein (560 aa).

Disordered stretches follow at residues 259 to 292 (SDIP…ESTP) and 313 to 400 (SSSS…GKSF). The span at 313–352 (SSSSLQLPETSLASSTEPSPSLQLSASSVTAMNGQNNSNK) shows a compositional bias: polar residues. A compositionally biased stretch (basic and acidic residues) spans 378 to 387 (QKVEPKKNKP).

It is found in the nucleus. This Xenopus laevis (African clawed frog) protein is S100P-binding protein (s100pbp).